Consider the following 315-residue polypeptide: Kinetochore protein SPC25 homolog (315 aa).

N-acetylmethionine is present on methionine 1. Residues 57 to 91 adopt a coiled-coil conformation; the sequence is TAQSQVELMNLKADLREAEDELVKVLAVKTRKEAR. Positions 261 to 315 are disordered; that stretch reads APAISFSTDTNMSTPENKRSKVQVNRRQKRGSESPLLAPVSTSATRRSSRFKGKK. A compositionally biased stretch (polar residues) spans 266–275; it reads FSTDTNMSTP. The span at 280–289 shows a compositional bias: basic residues; sequence SKVQVNRRQK.

This sequence belongs to the SPC25 family. In terms of assembly, component of the NDC80 complex, which consists of NDC80, NUF2, SPC24 and SPC25.

It is found in the chromosome. The protein localises to the centromere. Acts as a component of the essential kinetochore-associated NDC80 complex, which is required for chromosome segregation and spindle checkpoint activity to ensure proper cell division. The polypeptide is Kinetochore protein SPC25 homolog (Arabidopsis thaliana (Mouse-ear cress)).